Consider the following 151-residue polypeptide: Succinate dehydrogenase subunit 4, mitochondrial (151 aa).

The N-terminal 78 residues, 1–78 (MSLRRTILDL…RSISSSIGQS (78 aa)), are a transit peptide targeting the mitochondrion. H109 contacts heme. Y121 contributes to the a ubiquinone binding site. Residues 130 to 150 (LIVMSLGLFQIIVLKDIILFL) form a helical membrane-spanning segment.

In terms of assembly, component of complex II composed of eight subunits in plants: four classical SDH subunits SDH1, SDH2, SDH3 and SDH4 (a flavoprotein (FP), an iron-sulfur protein (IP), and a cytochrome b composed of a large and a small subunit.), as well as four subunits unknown in mitochondria from bacteria and heterotrophic eukaryotes. Heme is required as a cofactor. In terms of tissue distribution, expressed in flowers, inflorescences and stems.

Its subcellular location is the mitochondrion inner membrane. It functions in the pathway carbohydrate metabolism; tricarboxylic acid cycle. Membrane-anchoring subunit of succinate dehydrogenase (SDH). The sequence is that of Succinate dehydrogenase subunit 4, mitochondrial from Arabidopsis thaliana (Mouse-ear cress).